The primary structure comprises 175 residues: Thioredoxin-like protein CITRX, chloroplastic (175 aa).

Residues 1–73 (MQAASLAFHP…REDYLVKKLS (73 aa)) constitute a chloroplast transit peptide. In terms of domain architecture, Thioredoxin spans 74–175 (AKEIQELIKG…MMRDIINNDL (102 aa)). Active-site nucleophile residues include cysteine 98 and cysteine 101. The cysteines at positions 98 and 101 are disulfide-linked.

This sequence belongs to the thioredoxin family. Plant CITRX-type subfamily.

The protein resides in the plastid. It localises to the chloroplast. Functionally, probable thiol-disulfide oxidoreductase that may play a role in proper chloroplast development. The protein is Thioredoxin-like protein CITRX, chloroplastic of Solanum tuberosum (Potato).